The chain runs to 582 residues: ATP-dependent lipid A-core flippase (582 aa).

Helical transmembrane passes span 16 to 36 (LWPTIAPFKAGLIVAGVALIL), 63 to 83 (VLVWMPLVVIGLMILRGITSY), 153 to 173 (IIGLFIMMFYYSWQLSIILIV), 253 to 273 (PIIQLIASLALAFVLYAASFP), and 275 to 295 (VMDSLTAGTITVVFSSMIALM). The 283-residue stretch at 28-310 (IVAGVALILN…LTNVNAQFQR (283 aa)) folds into the ABC transmembrane type-1 domain. Residues 342–578 (VEFRNVTFTY…RGVYAQLHKM (237 aa)) form the ABC transporter domain. 376-383 (GRSGSGKS) contributes to the ATP binding site.

This sequence belongs to the ABC transporter superfamily. Lipid exporter (TC 3.A.1.106) family. Homodimer.

It is found in the cell inner membrane. It carries out the reaction ATP + H2O + lipid A-core oligosaccharideSide 1 = ADP + phosphate + lipid A-core oligosaccharideSide 2.. Involved in lipopolysaccharide (LPS) biosynthesis. Translocates lipid A-core from the inner to the outer leaflet of the inner membrane. Transmembrane domains (TMD) form a pore in the inner membrane and the ATP-binding domain (NBD) is responsible for energy generation. The sequence is that of ATP-dependent lipid A-core flippase from Escherichia coli O157:H7.